The primary structure comprises 290 residues: Arylamine N-acetyltransferase 2 (290 aa).

Catalysis depends on C68, which acts as the Acyl-thioester intermediate. Positions 103 and 104 each coordinate CoA. Residue 106–107 (IH) coordinates substrate. Residues H107 and D122 contribute to the active site. Y208, T214, and S287 together coordinate CoA.

This sequence belongs to the arylamine N-acetyltransferase family.

The protein localises to the cytoplasm. The catalysed reaction is an arylamine + acetyl-CoA = an N-acetylarylamine + CoA. It carries out the reaction an N-hydroxyarylamine + acetyl-CoA = an N-acetoxyarylamine + CoA. Functionally, catalyzes the N- or O-acetylation of various arylamine and heterocyclic amine substrates, and participates in the detoxification of a plethora of hydrazine and arylamine drugs. This is Arylamine N-acetyltransferase 2 (NAT2) from Macaca mulatta (Rhesus macaque).